Reading from the N-terminus, the 102-residue chain is Nucleoid-associated protein WIGBR5260 (102 aa).

It belongs to the YbaB/EbfC family. Homodimer.

It localises to the cytoplasm. Its subcellular location is the nucleoid. Its function is as follows. Binds to DNA and alters its conformation. May be involved in regulation of gene expression, nucleoid organization and DNA protection. In Wigglesworthia glossinidia brevipalpis, this protein is Nucleoid-associated protein WIGBR5260.